A 186-amino-acid polypeptide reads, in one-letter code: Probable GPI-anchored cupredoxin ARB_05732-1 (186 aa).

The signal sequence occupies residues 1-18; it reads MVNMNILTTVALAGLAAA. His-55 contacts Cu cation. Cys-66 and Cys-104 form a disulfide bridge. Residue Asn-87 is glycosylated (N-linked (GlcNAc...) asparagine). Cu cation-binding residues include Cys-98 and His-103. The segment at 130 to 160 is disordered; it reads GAGNGQAPSRVNNGSSGSGTPTSGGAPAATS. Asn-142 is a glycosylation site (N-linked (GlcNAc...) asparagine). Over residues 143–160 the composition is skewed to low complexity; sequence GSSGSGTPTSGGAPAATS. Gly-153 carries GPI-anchor amidated glycine lipidation. Residues 154–186 constitute a propeptide, removed in mature form; it reads GAPAATSPNAASSLTFSGAAALVAMGGAWIGLL.

The protein belongs to the multicopper oxidase family. The cofactor is Cu cation.

The protein localises to the cell membrane. It localises to the secreted. Probable electron transfer copper protein that serves as a direct electron donor. This is Probable GPI-anchored cupredoxin ARB_05732-1 from Arthroderma benhamiae (strain ATCC MYA-4681 / CBS 112371) (Trichophyton mentagrophytes).